Reading from the N-terminus, the 122-residue chain is Large ribosomal subunit protein uL14 (122 aa).

The protein belongs to the universal ribosomal protein uL14 family. In terms of assembly, part of the 50S ribosomal subunit. Forms a cluster with proteins L3 and L19. In the 70S ribosome, L14 and L19 interact and together make contacts with the 16S rRNA in bridges B5 and B8.

Binds to 23S rRNA. Forms part of two intersubunit bridges in the 70S ribosome. This chain is Large ribosomal subunit protein uL14, found in Ruminiclostridium cellulolyticum (strain ATCC 35319 / DSM 5812 / JCM 6584 / H10) (Clostridium cellulolyticum).